Here is a 513-residue protein sequence, read N- to C-terminus: Activin receptor type-2A (513 aa).

An N-terminal signal peptide occupies residues Met-1–Gly-19. At Ala-20–Pro-135 the chain is on the extracellular side. Cystine bridges form between Cys-30-Cys-60, Cys-50-Cys-78, Cys-85-Cys-104, Cys-91-Cys-103, and Cys-105-Cys-110. Residues Asn-43 and Asn-66 are each glycosylated (N-linked (GlcNAc...) asparagine). Residues Tyr-136–Tyr-161 traverse the membrane as a helical segment. Residues Arg-162–Leu-513 are Cytoplasmic-facing. The Protein kinase domain maps to Leu-192–Leu-485. Residues Lys-198–Val-206 and Lys-219 each bind ATP. The Proton acceptor role is filled by Asp-322.

It belongs to the protein kinase superfamily. TKL Ser/Thr protein kinase family. TGFB receptor subfamily. Part of a complex consisting of MAGI2/ARIP1, ACVR2A, ACVR1B and SMAD3. Interacts with MAGI2/ARIP1. Interacts with type I receptor ACVR1. Interacts with BMP7. Interacts with TSC22D1/TSC-22. Interacts with activin A/INHBA. It depends on Mg(2+) as a cofactor. Mn(2+) is required as a cofactor.

The protein resides in the cell membrane. It catalyses the reaction L-threonyl-[receptor-protein] + ATP = O-phospho-L-threonyl-[receptor-protein] + ADP + H(+). The enzyme catalyses L-seryl-[receptor-protein] + ATP = O-phospho-L-seryl-[receptor-protein] + ADP + H(+). In terms of biological role, on ligand binding, forms a receptor complex consisting of two type II and two type I transmembrane serine/threonine kinases. Type II receptors phosphorylate and activate type I receptors which autophosphorylate, then bind and activate SMAD transcriptional regulators. Receptor for activin A, activin B and inhibin A. Mediates induction of adipogenesis by GDF6. The sequence is that of Activin receptor type-2A from Homo sapiens (Human).